A 381-amino-acid polypeptide reads, in one-letter code: Subtilisin J (381 aa).

An N-terminal signal peptide occupies residues 1-29; sequence MRSKKLWISLLFALTLIFTMAFSNMSVQA. Positions 30–106 are excised as a propeptide; that stretch reads AGKSSTEKKY…VEEDHIAHEY (77 aa). Residues 38–103 enclose the Inhibitor I9 domain; sequence KYIVGFKQTM…VAYVEEDHIA (66 aa). Glutamine 108 contributes to the Ca(2+) binding site. One can recognise a Peptidase S8 domain in the interval 111-380; sequence PYGISQIKAP…KGLINVQAAA (270 aa). Aspartate 138 functions as the Charge relay system in the catalytic mechanism. A Ca(2+)-binding site is contributed by aspartate 147. Catalysis depends on histidine 170, which acts as the Charge relay system. Ca(2+) contacts are provided by leucine 181, asparagine 183, isoleucine 185, valine 187, alanine 275, tyrosine 277, and threonine 280. Residue serine 327 is the Charge relay system of the active site.

The protein belongs to the peptidase S8 family. Requires Ca(2+) as cofactor.

The protein localises to the secreted. It catalyses the reaction Hydrolysis of proteins with broad specificity for peptide bonds, and a preference for a large uncharged residue in P1. Hydrolyzes peptide amides.. In terms of biological role, subtilisin is an extracellular alkaline serine protease, it catalyzes the hydrolysis of proteins and peptide amides. This is Subtilisin J (aprJ) from Geobacillus stearothermophilus (Bacillus stearothermophilus).